Consider the following 346-residue polypeptide: N-acetyl-gamma-glutamyl-phosphate reductase (346 aa).

Residue C149 is part of the active site.

It belongs to the NAGSA dehydrogenase family. Type 1 subfamily.

Its subcellular location is the cytoplasm. The enzyme catalyses N-acetyl-L-glutamate 5-semialdehyde + phosphate + NADP(+) = N-acetyl-L-glutamyl 5-phosphate + NADPH + H(+). The protein operates within amino-acid biosynthesis; L-arginine biosynthesis; N(2)-acetyl-L-ornithine from L-glutamate: step 3/4. Functionally, catalyzes the NADPH-dependent reduction of N-acetyl-5-glutamyl phosphate to yield N-acetyl-L-glutamate 5-semialdehyde. The chain is N-acetyl-gamma-glutamyl-phosphate reductase from Oceanobacillus iheyensis (strain DSM 14371 / CIP 107618 / JCM 11309 / KCTC 3954 / HTE831).